An 859-amino-acid polypeptide reads, in one-letter code: Ubiquitin carboxyl-terminal hydrolase 23 (859 aa).

Polar residues predominate over residues 1–24; that stretch reads MEVATSSTEITIQTDRDPSSNNNG. The segment at 1 to 26 is disordered; sequence MEVATSSTEITIQTDRDPSSNNNGSC. The 304-residue stretch at 107–410 folds into the USP domain; it reads AGLQNLGNTC…KAYMLFYVRD (304 aa). Catalysis depends on Cys116, which acts as the Nucleophile. The active-site Proton acceptor is the His369. 2 disordered regions span residues 722 to 749 and 822 to 859; these read MISSSDGAVTSDQQQPVGSSDLSEASQN and EESYRGPNPFQMLASKRQKETKKKWTQSITDAKTAYRI.

This sequence belongs to the peptidase C19 family.

The enzyme catalyses Thiol-dependent hydrolysis of ester, thioester, amide, peptide and isopeptide bonds formed by the C-terminal Gly of ubiquitin (a 76-residue protein attached to proteins as an intracellular targeting signal).. Functionally, recognizes and hydrolyzes the peptide bond at the C-terminal Gly of ubiquitin. Involved in the processing of poly-ubiquitin precursors as well as that of ubiquitinated proteins. This chain is Ubiquitin carboxyl-terminal hydrolase 23 (UBP23), found in Arabidopsis thaliana (Mouse-ear cress).